The chain runs to 376 residues: Flap endonuclease 1 (376 aa).

The segment at 1–105 (MGIKGLSKLL…GELNKRKENA (105 aa)) is N-domain. Position 34 (Asp34) interacts with Mg(2+). DNA is bound by residues Arg47 and Arg71. Residues Asp87, Glu159, Glu161, Asp180, and Asp182 each contribute to the Mg(2+) site. Residues 123-254 (QAKKLMKRTA…ITAFELIQQY (132 aa)) form an I-domain region. Residue Glu159 coordinates DNA. DNA-binding residues include Gly232 and Asp234. Asp234 contacts Mg(2+). Residues 336 to 344 (AQGRLDSFF) are interaction with PCNA. The disordered stretch occupies residues 352 to 376 (SKSEAASGVKRKKPTTKAKESRKKK). Basic residues predominate over residues 360–376 (VKRKKPTTKAKESRKKK).

This sequence belongs to the XPG/RAD2 endonuclease family. FEN1 subfamily. Interacts with PCNA. Three molecules of FEN1 bind to one PCNA trimer with each molecule binding to one PCNA monomer. PCNA stimulates the nuclease activity without altering cleavage specificity. Mg(2+) serves as cofactor. In terms of processing, phosphorylated. Phosphorylation upon DNA damage induces relocalization to the nuclear plasma.

The protein resides in the nucleus. It is found in the nucleolus. The protein localises to the nucleoplasm. Its subcellular location is the mitochondrion. Functionally, structure-specific nuclease with 5'-flap endonuclease and 5'-3' exonuclease activities involved in DNA replication and repair. During DNA replication, cleaves the 5'-overhanging flap structure that is generated by displacement synthesis when DNA polymerase encounters the 5'-end of a downstream Okazaki fragment. It enters the flap from the 5'-end and then tracks to cleave the flap base, leaving a nick for ligation. Also involved in the long patch base excision repair (LP-BER) pathway, by cleaving within the apurinic/apyrimidinic (AP) site-terminated flap. Acts as a genome stabilization factor that prevents flaps from equilibrating into structures that lead to duplications and deletions. Also possesses 5'-3' exonuclease activity on nicked or gapped double-stranded DNA, and exhibits RNase H activity. Also involved in replication and repair of rDNA and in repairing mitochondrial DNA. The sequence is that of Flap endonuclease 1 from Entamoeba dispar (strain ATCC PRA-260 / SAW760).